A 476-amino-acid chain; its full sequence is Homeobox protein invected (476 aa).

Disordered stretches follow at residues 1 to 43, 273 to 331, and 347 to 381; these read MAAV…SEDI, KTRY…TSGD, and DRPSSGRSPRTRRPKKPPGDTASNDEKRPRTAFSG. Polar residues predominate over residues 23-32; it reads SPNTRDTTSP. 2 stretches are compositionally biased toward basic and acidic residues: residues 33–43 and 292–305; these read ECHDDEKSEDI and KLDEARVPDIKTPD. The span at 318-331 shows a compositional bias: low complexity; it reads GSNSGSTSGATSGD. A DNA-binding region (homeobox) is located at residues 372 to 431; it reads EKRPRTAFSGPQLARLKHEFAENRYLTERRRQSLAAELGLAEAQIKIWFQNKRAKIKKAS.

It belongs to the engrailed homeobox family. Expressed in the middle silk gland but not in the posterior silk gland during the fourth molt/fifth intermolt period.

It is found in the nucleus. This protein might be involved in the compartmentalization of the silk gland. The chain is Homeobox protein invected (INV) from Bombyx mori (Silk moth).